The chain runs to 417 residues: NADH-quinone oxidoreductase subunit D 2 (417 aa).

Belongs to the complex I 49 kDa subunit family. In terms of assembly, NDH-1 is composed of 14 different subunits. Subunits NuoB, C, D, E, F, and G constitute the peripheral sector of the complex.

The protein resides in the cell membrane. It carries out the reaction a quinone + NADH + 5 H(+)(in) = a quinol + NAD(+) + 4 H(+)(out). NDH-1 shuttles electrons from NADH, via FMN and iron-sulfur (Fe-S) centers, to quinones in the respiratory chain. The immediate electron acceptor for the enzyme in this species is believed to be ubiquinone. Couples the redox reaction to proton translocation (for every two electrons transferred, four hydrogen ions are translocated across the cytoplasmic membrane), and thus conserves the redox energy in a proton gradient. The chain is NADH-quinone oxidoreductase subunit D 2 from Roseiflexus sp. (strain RS-1).